The primary structure comprises 217 residues: Thiamine-phosphate synthase (217 aa).

4-amino-2-methyl-5-(diphosphooxymethyl)pyrimidine is bound by residues 37-41 (QFREK) and asparagine 72. Mg(2+) contacts are provided by aspartate 73 and aspartate 92. Serine 110 contacts 4-amino-2-methyl-5-(diphosphooxymethyl)pyrimidine. 136–138 (TVS) serves as a coordination point for 2-[(2R,5Z)-2-carboxy-4-methylthiazol-5(2H)-ylidene]ethyl phosphate. Lysine 139 lines the 4-amino-2-methyl-5-(diphosphooxymethyl)pyrimidine pocket. Residues glycine 168 and 188–189 (IS) contribute to the 2-[(2R,5Z)-2-carboxy-4-methylthiazol-5(2H)-ylidene]ethyl phosphate site.

Belongs to the thiamine-phosphate synthase family. The cofactor is Mg(2+).

It carries out the reaction 2-[(2R,5Z)-2-carboxy-4-methylthiazol-5(2H)-ylidene]ethyl phosphate + 4-amino-2-methyl-5-(diphosphooxymethyl)pyrimidine + 2 H(+) = thiamine phosphate + CO2 + diphosphate. It catalyses the reaction 2-(2-carboxy-4-methylthiazol-5-yl)ethyl phosphate + 4-amino-2-methyl-5-(diphosphooxymethyl)pyrimidine + 2 H(+) = thiamine phosphate + CO2 + diphosphate. The enzyme catalyses 4-methyl-5-(2-phosphooxyethyl)-thiazole + 4-amino-2-methyl-5-(diphosphooxymethyl)pyrimidine + H(+) = thiamine phosphate + diphosphate. The protein operates within cofactor biosynthesis; thiamine diphosphate biosynthesis; thiamine phosphate from 4-amino-2-methyl-5-diphosphomethylpyrimidine and 4-methyl-5-(2-phosphoethyl)-thiazole: step 1/1. Functionally, condenses 4-methyl-5-(beta-hydroxyethyl)thiazole monophosphate (THZ-P) and 2-methyl-4-amino-5-hydroxymethyl pyrimidine pyrophosphate (HMP-PP) to form thiamine monophosphate (TMP). The polypeptide is Thiamine-phosphate synthase (Anoxybacillus flavithermus (strain DSM 21510 / WK1)).